Reading from the N-terminus, the 339-residue chain is Type IV secretion system protein PtlH homolog (339 aa).

This sequence belongs to the GSP E family.

This is Type IV secretion system protein PtlH homolog (ptlH) from Bordetella bronchiseptica (strain ATCC BAA-588 / NCTC 13252 / RB50) (Alcaligenes bronchisepticus).